Consider the following 201-residue polypeptide: MARFRGSNWKKSRRLGISLSGTGKELEKRPYAPGQHGPNQRKKLSEYAIQLREKQKLRYLYGITERQFHNTFIEAGKQSGVHGENFMRLLARRLDAVVYALGLARTRRQARQLVGHGHIEVDGKRVNIPSYTLKPGQVVSVREKSQKLDIIQESVEINNFVPEYLDFDEEKLSGTFVRVPERSELPAEINEQLIVEYYSGK.

In terms of domain architecture, S4 RNA-binding spans 92–155; sequence RRLDAVVYAL…QKLDIIQESV (64 aa).

This sequence belongs to the universal ribosomal protein uS4 family. In terms of assembly, part of the 30S ribosomal subunit. Contacts protein S5. The interaction surface between S4 and S5 is involved in control of translational fidelity.

Its function is as follows. One of the primary rRNA binding proteins, it binds directly to 16S rRNA where it nucleates assembly of the body of the 30S subunit. In terms of biological role, with S5 and S12 plays an important role in translational accuracy. This Staphylococcus carnosus (strain TM300) protein is Small ribosomal subunit protein uS4.